Here is a 286-residue protein sequence, read N- to C-terminus: Bifunctional protein FolD (286 aa).

NADP(+) is bound by residues 165 to 167 (GRS), S190, and V231.

This sequence belongs to the tetrahydrofolate dehydrogenase/cyclohydrolase family. As to quaternary structure, homodimer.

The catalysed reaction is (6R)-5,10-methylene-5,6,7,8-tetrahydrofolate + NADP(+) = (6R)-5,10-methenyltetrahydrofolate + NADPH. The enzyme catalyses (6R)-5,10-methenyltetrahydrofolate + H2O = (6R)-10-formyltetrahydrofolate + H(+). It participates in one-carbon metabolism; tetrahydrofolate interconversion. In terms of biological role, catalyzes the oxidation of 5,10-methylenetetrahydrofolate to 5,10-methenyltetrahydrofolate and then the hydrolysis of 5,10-methenyltetrahydrofolate to 10-formyltetrahydrofolate. The chain is Bifunctional protein FolD from Bacillus thuringiensis (strain Al Hakam).